We begin with the raw amino-acid sequence, 827 residues long: 6-phosphofructo-2-kinase 1 (827 aa).

2 disordered regions span residues 1–97 (MFKP…ENSA) and 149–175 (TRHH…DGLI). Positions 31–41 (SQDSSYDLLSR) are enriched in low complexity. A compositionally biased stretch (basic and acidic residues) spans 42–59 (SSDDKIDAEKGPHDELSK). Polar residues predominate over residues 72–97 (TPISSNWNSPGITEENTPSDSPENSA). Serine 92 bears the Phosphoserine mark. Threonine 157 carries the post-translational modification Phosphothreonine. 190 to 197 (GLPATGKS) serves as a coordination point for ATP. Active-site residues include aspartate 277 and cysteine 309. Residue arginine 343 participates in beta-D-fructose 6-phosphate binding. Serine 404 (phosphoserine intermediate) is an active-site residue. Glutamate 497 is a catalytic residue. Histidine 565 acts as the Proton donor in catalysis. 4 positions are modified to phosphoserine: serine 644, serine 652, serine 659, and serine 667. 2 disordered regions span residues 649–704 (APPS…SNFN) and 799–827 (HGKD…QSHV). Low complexity predominate over residues 671–682 (SASSSQSELSEQ). The segment covering 683–704 (PKNSVSAQTGSNNTTLIGSNFN) has biased composition (polar residues).

It carries out the reaction beta-D-fructose 6-phosphate + ATP = beta-D-fructose 2,6-bisphosphate + ADP + H(+). Its activity is regulated as follows. Phosphorylation results in the activation of the kinase activity. In terms of biological role, synthesis of fructose 2,6-bisphosphate. This chain is 6-phosphofructo-2-kinase 1 (PFK26), found in Saccharomyces cerevisiae (strain ATCC 204508 / S288c) (Baker's yeast).